The primary structure comprises 234 residues: Probable glycerol uptake facilitator protein (234 aa).

Transmembrane regions (helical) follow at residues 3-23 (VYLA…GVVA) and 36-56 (GWIV…YLVG). The NPA 1 motif lies at 64–66 (NPA). Transmembrane regions (helical) follow at residues 82-102 (VPGY…LVYL), 134-154 (LLTE…IGAN), and 164-184 (LVGF…GYAI). The NPA 2 motif lies at 185-187 (NPA). A helical membrane pass occupies residues 214-234 (VPIIGPIIGGILGASLYNWLF).

The protein belongs to the MIP/aquaporin (TC 1.A.8) family.

It is found in the cell membrane. It carries out the reaction glycerol(in) = glycerol(out). Its function is as follows. Mediates glycerol diffusion across the cytoplasmic membrane via a pore-type mechanism. The protein is Probable glycerol uptake facilitator protein (glpF) of Thermotoga maritima (strain ATCC 43589 / DSM 3109 / JCM 10099 / NBRC 100826 / MSB8).